We begin with the raw amino-acid sequence, 393 residues long: Phosphoglycerate kinase (393 aa).

Residues 21-23 (DLN), Arg-36, 59-62 (HLGR), Arg-114, and Arg-147 contribute to the substrate site. Residues Lys-198, Glu-320, and 346–349 (GGDT) each bind ATP.

This sequence belongs to the phosphoglycerate kinase family. Monomer.

It localises to the cytoplasm. The enzyme catalyses (2R)-3-phosphoglycerate + ATP = (2R)-3-phospho-glyceroyl phosphate + ADP. It participates in carbohydrate degradation; glycolysis; pyruvate from D-glyceraldehyde 3-phosphate: step 2/5. The chain is Phosphoglycerate kinase from Methylobacillus flagellatus (strain ATCC 51484 / DSM 6875 / VKM B-1610 / KT).